Reading from the N-terminus, the 258-residue chain is Imidazole glycerol phosphate synthase subunit HisF (258 aa).

Active-site residues include Asp-11 and Asp-130.

This sequence belongs to the HisA/HisF family. Heterodimer of HisH and HisF.

Its subcellular location is the cytoplasm. It catalyses the reaction 5-[(5-phospho-1-deoxy-D-ribulos-1-ylimino)methylamino]-1-(5-phospho-beta-D-ribosyl)imidazole-4-carboxamide + L-glutamine = D-erythro-1-(imidazol-4-yl)glycerol 3-phosphate + 5-amino-1-(5-phospho-beta-D-ribosyl)imidazole-4-carboxamide + L-glutamate + H(+). It functions in the pathway amino-acid biosynthesis; L-histidine biosynthesis; L-histidine from 5-phospho-alpha-D-ribose 1-diphosphate: step 5/9. IGPS catalyzes the conversion of PRFAR and glutamine to IGP, AICAR and glutamate. The HisF subunit catalyzes the cyclization activity that produces IGP and AICAR from PRFAR using the ammonia provided by the HisH subunit. The polypeptide is Imidazole glycerol phosphate synthase subunit HisF (Xanthobacter autotrophicus (strain ATCC BAA-1158 / Py2)).